Reading from the N-terminus, the 722-residue chain is Bifunctional UDP-N-acetylglucosamine 2-epimerase/N-acetylmannosamine kinase (722 aa).

UDP-binding residues include Arg-19, Ser-23, Arg-113, His-220, and Asn-253. The CMP-N-acetyl-beta-neuraminate site is built by Lys-259, Glu-271, Lys-280, and His-281. Residues Val-282, Ser-301, Ser-302, Glu-307, and Arg-321 each coordinate UDP. The N-acetylmannosamine kinase stretch occupies residues 406–722 (TLSALAVDLG…VLDYTTRRIY (317 aa)). Asp-413 is a Mg(2+) binding site. Residue Gly-416 coordinates an N-acyl-D-mannosamine 6-phosphate. Residues Thr-417, Asn-418, and Arg-420 each coordinate ADP. An N-acyl-D-mannosamine 6-phosphate is bound by residues Gly-476, Arg-477, Thr-489, Asn-516, Asp-517, and Gly-545. 5 residues coordinate an N-acyl-D-mannosamine: Gly-476, Arg-477, Thr-489, Asn-516, and Asp-517. The active site involves Asp-517. Residues Glu-566 and His-569 each coordinate an N-acyl-D-mannosamine. His-569 contributes to the an N-acyl-D-mannosamine 6-phosphate binding site. Residues His-569, Cys-579, Cys-581, and Cys-586 each coordinate Zn(2+). Glu-588 provides a ligand contact to an N-acyl-D-mannosamine 6-phosphate. Glu-588 contributes to the an N-acyl-D-mannosamine binding site.

In the N-terminal section; belongs to the UDP-N-acetylglucosamine 2-epimerase family. It in the C-terminal section; belongs to the ROK (NagC/XylR) family. In terms of assembly, homodimer. Homotetramer. Homohexamer. The hexameric form exhibits both enzyme activities, whereas the dimeric form only catalyzes the phosphorylation of N-acyl-D-mannosamine. Post-translationally, phosphorylated. Phosphorylation by PKC activates the UDP-N-acetylglucosamine 2-epimerase activity. As to expression, highest expression in liver and placenta. Also found in heart, brain, lung, kidney, skeletal muscle and pancreas. Isoform 1 is expressed in heart, brain, kidney, liver, placenta, lung, spleen, pancreas, skeletal muscle and colon. Isoform 2 is expressed mainly in placenta, but also in brain, kidney, liver, lung, pancreas and colon. Isoform 3 is expressed at low level in kidney, liver, placenta and colon.

The protein resides in the cytoplasm. It is found in the cytosol. The catalysed reaction is UDP-N-acetyl-alpha-D-glucosamine + H2O = aldehydo-N-acetyl-D-mannosamine + UDP + H(+). The enzyme catalyses an N-acyl-D-mannosamine + ATP = an N-acyl-D-mannosamine 6-phosphate + ADP + H(+). It functions in the pathway amino-sugar metabolism; N-acetylneuraminate biosynthesis. Its activity is regulated as follows. The UDP-N-acetylglucosamine 2-epimerase activity, in contrast to the N-acetylmannosamine kinase activity, exhibits allosteric regulation by cytidine monophosphate-N-acetylneuraminic acid (CMP-Neu5Ac), the end product of neuraminic acid biosynthesis. Moreover, the activity is contingent upon the oligomeric state of the enzyme. The monomeric form is inactive, while the dimeric form selectively catalyzes the phosphorylation of N-acetylmannosamine. The hexameric form, on the other hand, demonstrates full proficiency in both enzyme activities. Furthermore, the UDP-N-acetylglucosamine 2-epimerase activity is increased by PKC-mediated phosphorylation. Bifunctional enzyme that possesses both UDP-N-acetylglucosamine 2-epimerase and N-acetylmannosamine kinase activities, and serves as the initiator of the biosynthetic pathway leading to the production of N-acetylneuraminic acid (NeuAc), a critical precursor in the synthesis of sialic acids. By catalyzing this pivotal and rate-limiting step in sialic acid biosynthesis, this enzyme assumes a pivotal role in governing the regulation of cell surface sialylation, playing a role in embryonic angiogenesis. Sialic acids represent a category of negatively charged sugars that reside on the surface of cells as terminal components of glycoconjugates and mediate important functions in various cellular processes, including cell adhesion, signal transduction, and cellular recognition. This is Bifunctional UDP-N-acetylglucosamine 2-epimerase/N-acetylmannosamine kinase from Homo sapiens (Human).